Reading from the N-terminus, the 357-residue chain is Putative lipopolysaccharide heptosyltransferase 4 (357 aa).

It catalyses the reaction alpha-D-Glc-(1-&gt;2)-alpha-D-Glc-(1-&gt;3)-[alpha-D-Gal-(1-&gt;6)]-alpha-D-Glc-(1-&gt;3)-[L-alpha-D-Hep-(1-&gt;7)]-4-O-PO3(2-)-L-alpha-D-Hep-(1-&gt;3)-4-O-PO3(2-)-L-alpha-D-Hep-(1-&gt;5)-[alpha-Kdo-(2-&gt;4)]-alpha-Kdo-(2-&gt;6)-lipid A + ADP-L-glycero-beta-D-manno-heptose = lipid A-core + ADP + H(+). The protein operates within bacterial outer membrane biogenesis; LPS core biosynthesis. Transferase involved in the biosynthesis of the core oligosaccharide region of lipopolysaccharide (LPS). May catalyze the addition of the terminal heptose (heptose IV) to the outer-core glucose III, the last step of the lipid A-core oligosaccharide biosynthesis. The protein is Putative lipopolysaccharide heptosyltransferase 4 of Escherichia coli (strain K12).